Here is an 87-residue protein sequence, read N- to C-terminus: Cytochrome c oxidase subunit 6B1 (87 aa).

One can recognise a CHCH domain in the interval 28-74 (TRNCWQNYLDFHRCQKAMTTKGGNVSVCEWYQRVYQSLCPTSWVTDW). A Cx9C motif motif is present at residues 31–41 (CWQNYLDFHRC). 2 disulfides stabilise this stretch: cysteine 31/cysteine 66 and cysteine 41/cysteine 55. Positions 55–66 (CEWYQRVYQSLC) match the Cx10C motif motif.

Its subcellular location is the mitochondrion intermembrane space. In terms of biological role, connects the two COX monomers into the physiological dimeric form. The sequence is that of Cytochrome c oxidase subunit 6B1 (COX6B1) from Macaca fascicularis (Crab-eating macaque).